A 137-amino-acid polypeptide reads, in one-letter code: Actin-depolymerizing factor 7 (137 aa).

Phosphoserine is present on serine 6. An ADF-H domain is found at 7–137 (GMAVEDECKL…SFDIIKSRAL (131 aa)).

The protein belongs to the actin-binding proteins ADF family. As to expression, specifically expressed in pollen.

Its subcellular location is the cytoplasm. It is found in the cytoskeleton. In terms of biological role, actin-depolymerizing protein. Severs actin filaments (F-actin) and binds to actin monomers. Binds monomeric actin (G-actin) with a marked preference for the ADP-loaded form and inhibits the rate of nucleotide exchange on G-actin. Required for pollen tube growth. Promotes turnover of longitudinal actin cables by severing actin filaments in pollen tubes. This chain is Actin-depolymerizing factor 7 (ADF7), found in Arabidopsis thaliana (Mouse-ear cress).